A 282-amino-acid chain; its full sequence is 4-diphosphocytidyl-2-C-methyl-D-erythritol kinase (282 aa).

Lys15 is an active-site residue. 98 to 108 (PMGGGVGGGSS) is an ATP binding site. Asp140 is a catalytic residue.

This sequence belongs to the GHMP kinase family. IspE subfamily.

It catalyses the reaction 4-CDP-2-C-methyl-D-erythritol + ATP = 4-CDP-2-C-methyl-D-erythritol 2-phosphate + ADP + H(+). The protein operates within isoprenoid biosynthesis; isopentenyl diphosphate biosynthesis via DXP pathway; isopentenyl diphosphate from 1-deoxy-D-xylulose 5-phosphate: step 3/6. Its function is as follows. Catalyzes the phosphorylation of the position 2 hydroxy group of 4-diphosphocytidyl-2C-methyl-D-erythritol. The polypeptide is 4-diphosphocytidyl-2-C-methyl-D-erythritol kinase (Azoarcus sp. (strain BH72)).